A 252-amino-acid polypeptide reads, in one-letter code: Phosphate import ATP-binding protein PstB 1 (252 aa).

Residues 6 to 247 enclose the ABC transporter domain; sequence LQIRDLSVYY…PKRKETEDYI (242 aa). Residue 38–45 participates in ATP binding; sequence GPSGSGKS.

This sequence belongs to the ABC transporter superfamily. Phosphate importer (TC 3.A.1.7) family. In terms of assembly, the complex is composed of two ATP-binding proteins (PstB), two transmembrane proteins (PstC and PstA) and a solute-binding protein (PstS).

It is found in the cell membrane. The catalysed reaction is phosphate(out) + ATP + H2O = ADP + 2 phosphate(in) + H(+). In terms of biological role, part of the ABC transporter complex PstSACB involved in phosphate import. Responsible for energy coupling to the transport system. This chain is Phosphate import ATP-binding protein PstB 1, found in Streptococcus pyogenes serotype M6 (strain ATCC BAA-946 / MGAS10394).